Consider the following 1216-residue polypeptide: AF4/FMR2 family member 1 (1216 aa).

Disordered stretches follow at residues 1-52 (MAAH…KGDE), 68-104 (KEFL…GAAS), 116-139 (IHTS…AQPR), 152-217 (PRLT…VSSK), 244-275 (AVTS…MQQK), and 352-728 (SWPP…RTSG). 2 stretches are compositionally biased toward basic and acidic residues: residues 9–35 (NEDR…EAFP) and 78–99 (HRLD…HDRG). Over residues 166 to 182 (RKCDRRAEGDSAPERKL) the composition is skewed to basic and acidic residues. Phosphoserine is present on residues Ser183, Ser191, and Ser197. The span at 207–217 (SKAHSSGVSSK) shows a compositional bias: low complexity. Pro residues predominate over residues 252–266 (PPQPPCQTFPPPPLP). Residues 383-406 (PATQSQKQYDTPSKTHPNPQQGTS) are compositionally biased toward polar residues. Over residues 408–424 (LEDDLQLSDSEDSDTEQ) the composition is skewed to acidic residues. The segment covering 429–438 (PPSPPAPPSA) has biased composition (pro residues). Acidic residues predominate over residues 457–484 (ESSESDSSSDSESESSSSDSEEEEENEP). Lys682 carries the N6-acetyllysine modification. Low complexity predominate over residues 710–728 (SQGPSHSSRGSSGSVRTSG). Phosphoserine occurs at positions 755 and 760. Disordered regions lie at residues 777–969 (RIPQ…RQQA) and 1094–1125 (APSP…QSSA). A compositionally biased stretch (basic and acidic residues) spans 789–808 (RKAEDKQLSAGKKQDSETKS). Composition is skewed to low complexity over residues 824-846 (KKST…SSHT), 867-886 (PPAS…PSRP), 902-915 (PPRS…SSTD), and 1115-1125 (PASSVGSQSSA).

It belongs to the AF4 family. In terms of assembly, component of the super elongation complex (SEC), at least composed of EAF1, EAF2, CDK9, MLLT3/AF9, AFF (AFF1 or AFF4), the P-TEFb complex and ELL (ELL, ELL2 or ELL3).

Its subcellular location is the nucleus. In Mus musculus (Mouse), this protein is AF4/FMR2 family member 1 (Aff1).